The chain runs to 357 residues: Arginine kinase (357 aa).

An N-acetylalanine modification is found at Ala-2. Residues 9 to 91 (KLDEGFKKLE…FDPIIEDYHK (83 aa)) form the Phosphagen kinase N-terminal domain. Residue 64–68 (GVGVY) coordinates L-arginine. The Phosphagen kinase C-terminal domain occupies 119–356 (FVISTRVRCG…LELIKIEKEM (238 aa)). Residues 122–126 (STRVR) and His-185 each bind ATP. Glu-225 contributes to the L-arginine binding site. Arg-229 is an ATP binding site. Cys-271 provides a ligand contact to L-arginine. ATP-binding positions include 280–284 (RASVH) and 309–314 (RGTRGE). Glu-314 contacts L-arginine.

The protein belongs to the ATP:guanido phosphotransferase family.

The catalysed reaction is L-arginine + ATP = N(omega)-phospho-L-arginine + ADP + H(+). In Eriocheir sinensis (Chinese mitten crab), this protein is Arginine kinase.